The primary structure comprises 306 residues: Homoserine kinase (306 aa).

Residue 90 to 100 (PLARGLGSSAS) coordinates ATP.

This sequence belongs to the GHMP kinase family. Homoserine kinase subfamily.

It localises to the cytoplasm. It carries out the reaction L-homoserine + ATP = O-phospho-L-homoserine + ADP + H(+). It functions in the pathway amino-acid biosynthesis; L-threonine biosynthesis; L-threonine from L-aspartate: step 4/5. In terms of biological role, catalyzes the ATP-dependent phosphorylation of L-homoserine to L-homoserine phosphate. The chain is Homoserine kinase from Staphylococcus epidermidis (strain ATCC 12228 / FDA PCI 1200).